Here is a 399-residue protein sequence, read N- to C-terminus: Methylthioribose kinase (399 aa).

ATP-binding positions include asparagine 40, lysine 57, and 111–113 (EDL). Residue aspartate 229 participates in substrate binding. Position 246-248 (246-248 (DAE)) interacts with ATP. Arginine 344 serves as a coordination point for substrate.

This sequence belongs to the methylthioribose kinase family. Homodimer.

The enzyme catalyses 5-(methylsulfanyl)-D-ribose + ATP = 5-(methylsulfanyl)-alpha-D-ribose 1-phosphate + ADP + H(+). The protein operates within amino-acid biosynthesis; L-methionine biosynthesis via salvage pathway; S-methyl-5-thio-alpha-D-ribose 1-phosphate from S-methyl-5'-thioadenosine (hydrolase route): step 2/2. Functionally, catalyzes the phosphorylation of methylthioribose into methylthioribose-1-phosphate. The protein is Methylthioribose kinase of Klebsiella pneumoniae subsp. pneumoniae (strain ATCC 700721 / MGH 78578).